The sequence spans 61 residues: Putative antitoxin PYRAB11980 (61 aa).

The protein belongs to the UPF0165 family.

Possibly the antitoxin component of a type II toxin-antitoxin (TA) system. The polypeptide is Putative antitoxin PYRAB11980 (Pyrococcus abyssi (strain GE5 / Orsay)).